A 374-amino-acid polypeptide reads, in one-letter code: UDP-N-acetylglucosamine--N-acetylmuramyl-(pentapeptide) pyrophosphoryl-undecaprenol N-acetylglucosamine transferase (374 aa).

Residues 35–37 (TGG), Asn-144, Arg-185, Ser-211, and Gln-305 contribute to the UDP-N-acetyl-alpha-D-glucosamine site.

Belongs to the glycosyltransferase 28 family. MurG subfamily.

The protein localises to the cell inner membrane. The catalysed reaction is di-trans,octa-cis-undecaprenyl diphospho-N-acetyl-alpha-D-muramoyl-L-alanyl-D-glutamyl-meso-2,6-diaminopimeloyl-D-alanyl-D-alanine + UDP-N-acetyl-alpha-D-glucosamine = di-trans,octa-cis-undecaprenyl diphospho-[N-acetyl-alpha-D-glucosaminyl-(1-&gt;4)]-N-acetyl-alpha-D-muramoyl-L-alanyl-D-glutamyl-meso-2,6-diaminopimeloyl-D-alanyl-D-alanine + UDP + H(+). It participates in cell wall biogenesis; peptidoglycan biosynthesis. Its function is as follows. Cell wall formation. Catalyzes the transfer of a GlcNAc subunit on undecaprenyl-pyrophosphoryl-MurNAc-pentapeptide (lipid intermediate I) to form undecaprenyl-pyrophosphoryl-MurNAc-(pentapeptide)GlcNAc (lipid intermediate II). The polypeptide is UDP-N-acetylglucosamine--N-acetylmuramyl-(pentapeptide) pyrophosphoryl-undecaprenol N-acetylglucosamine transferase (Trichodesmium erythraeum (strain IMS101)).